Consider the following 276-residue polypeptide: Vitamin B12-binding protein (276 aa).

Residues 1 to 20 form the signal peptide; sequence MIVRFLCWLTGLLLCTAAYA. The Fe/B12 periplasmic-binding domain maps to 24 to 273; the sequence is RVISLAPHAT…QLTALSPGSS (250 aa). A disulfide bridge links cysteine 186 with cysteine 262.

This sequence belongs to the BtuF family. The complex is composed of two ATP-binding proteins (BtuD), two transmembrane proteins (BtuC) and a solute-binding protein (BtuF).

Its subcellular location is the periplasm. Part of the ABC transporter complex BtuCDF involved in vitamin B12 import. Binds vitamin B12 and delivers it to the periplasmic surface of BtuC. The chain is Vitamin B12-binding protein from Pectobacterium carotovorum subsp. carotovorum (strain PC1).